Reading from the N-terminus, the 476-residue chain is Bifunctional protein HldE (476 aa).

The interval 1-319 (MKVSLPAFEK…RALSVNHGES (319 aa)) is ribokinase. An ATP-binding site is contributed by 195 to 198 (NMGE). Aspartate 264 is a catalytic residue. Residues 345 to 476 (MTNGCFDILH…SIIENIMANQ (132 aa)) form a cytidylyltransferase region.

It in the N-terminal section; belongs to the carbohydrate kinase PfkB family. The protein in the C-terminal section; belongs to the cytidylyltransferase family. As to quaternary structure, homodimer.

The catalysed reaction is D-glycero-beta-D-manno-heptose 7-phosphate + ATP = D-glycero-beta-D-manno-heptose 1,7-bisphosphate + ADP + H(+). The enzyme catalyses D-glycero-beta-D-manno-heptose 1-phosphate + ATP + H(+) = ADP-D-glycero-beta-D-manno-heptose + diphosphate. Its pathway is nucleotide-sugar biosynthesis; ADP-L-glycero-beta-D-manno-heptose biosynthesis; ADP-L-glycero-beta-D-manno-heptose from D-glycero-beta-D-manno-heptose 7-phosphate: step 1/4. The protein operates within nucleotide-sugar biosynthesis; ADP-L-glycero-beta-D-manno-heptose biosynthesis; ADP-L-glycero-beta-D-manno-heptose from D-glycero-beta-D-manno-heptose 7-phosphate: step 3/4. Its function is as follows. Catalyzes the phosphorylation of D-glycero-D-manno-heptose 7-phosphate at the C-1 position to selectively form D-glycero-beta-D-manno-heptose-1,7-bisphosphate. Functionally, catalyzes the ADP transfer from ATP to D-glycero-beta-D-manno-heptose 1-phosphate, yielding ADP-D-glycero-beta-D-manno-heptose. This Shewanella sediminis (strain HAW-EB3) protein is Bifunctional protein HldE.